The following is a 100-amino-acid chain: Integration host factor subunit alpha (100 aa).

The disordered stretch occupies residues 53 to 72 (FDLRDKKQRPGRNPKTGEEI).

The protein belongs to the bacterial histone-like protein family. As to quaternary structure, heterodimer of an alpha and a beta chain.

This protein is one of the two subunits of integration host factor, a specific DNA-binding protein that functions in genetic recombination as well as in transcriptional and translational control. This chain is Integration host factor subunit alpha, found in Marinobacter nauticus (strain ATCC 700491 / DSM 11845 / VT8) (Marinobacter aquaeolei).